Reading from the N-terminus, the 533-residue chain is Beta-1,4 N-acetylgalactosaminyltransferase 1 (533 aa).

Over 1–7 (MWLGRRA) the chain is Cytoplasmic. Residues 8–25 (LCALVLLLACASLGLLYA) traverse the membrane as a helical; Signal-anchor for type II membrane protein segment. Residues 26-533 (STRDAPGLRL…KHRLQCMTSQ (508 aa)) lie on the Lumenal side of the membrane. 3 N-linked (GlcNAc...) asparagine glycosylation sites follow: Asn-79, Asn-179, and Asn-274. A disulfide bond links Cys-429 and Cys-476.

The protein belongs to the glycosyltransferase 2 family. Homodimer; disulfide-linked.

It is found in the golgi apparatus membrane. The enzyme catalyses a ganglioside GM3 (d18:1(4E)) + UDP-N-acetyl-alpha-D-galactosamine = a ganglioside GM2 (d18:1(4E)) + UDP + H(+). It carries out the reaction a ganglioside GM3 + UDP-N-acetyl-alpha-D-galactosamine = a ganglioside GM2 + UDP + H(+). The catalysed reaction is a ganglioside GD3 + UDP-N-acetyl-alpha-D-galactosamine = a ganglioside GD2 + UDP + H(+). It catalyses the reaction a ganglioside GD3 (d18:1(4E)) + UDP-N-acetyl-alpha-D-galactosamine = a ganglioside GD2 (d18:1(4E)) + UDP + H(+). The enzyme catalyses a beta-D-Gal-(1-&gt;4)-beta-D-Glc-(1&lt;-&gt;1)-Cer(d18:1(4E)) + UDP-N-acetyl-alpha-D-galactosamine = a ganglioside GA2 (d18:1(4E)) + UDP + H(+). It carries out the reaction a ganglioside GD1a + UDP-N-acetyl-alpha-D-galactosamine = a ganglioside GalNAc-GD1a + UDP + H(+). The catalysed reaction is a ganglioside GT3 (d18:1(4E)) + UDP-N-acetyl-alpha-D-galactosamine = a ganglioside GT2 (d18:1(4E)) + UDP + H(+). It catalyses the reaction a beta-D-galactosyl-(1-&gt;4)-beta-D-glucosyl-(1&lt;-&gt;1)-ceramide + UDP-N-acetyl-alpha-D-galactosamine = a ganglioside GA2 + UDP + H(+). The enzyme catalyses a neolactoside IV(3)-alpha-NeuGc-nLc4Cer + UDP-N-acetyl-alpha-D-galactosamine = a neolactoside IV(4)-beta-GalNAc-IV(3)-alpha-NeuGc-nLc4Cer + UDP + H(+). Its pathway is sphingolipid metabolism. Functionally, involved in the biosynthesis of gangliosides GM2, GD2, GT2 and GA2 from GM3, GD3, GT3 and GA3, respectively. This chain is Beta-1,4 N-acetylgalactosaminyltransferase 1, found in Homo sapiens (Human).